The chain runs to 392 residues: Iripin-1 (392 aa).

The N-terminal stretch at 1–16 is a signal peptide; sequence MKPLVPLLFLLVSCRA. 3 N-linked (GlcNAc...) asparagine glycosylation sites follow: N104, N196, and N265.

It belongs to the serpin family. In terms of assembly, interacts with human KLKB1. Interacts with human ST14. Interacts with human PLG (plasmin). Highly expressed in salivary gland. Expressed in midgut and ovary.

The protein resides in the secreted. Its function is as follows. Serine protease inhibitor that modulates blood feeding of ticks on vertebrate species. Modestly inhibits human trypsin, plasma kallikrein (KLKB1), matriptase (ST14) and plasmin (PLG) via a classic serpin inhibitory mechanism. Modestly reduces enzymatic activity of human alpha-chymotrypsin, coagulation factor Xa (F10), factor XIIa (F12), cathepsin G (CTSG), tPA/tissue-type plasminogen activator (PLAT) and uPA/urokinase-type plasminogen activator (PLAU). Probably acts as a substrate rather than an inhibitor for the human neutrophil elastase (ELANE) and thus reduces its enzymatic activity in in vitro assays. Decreases expression of adhesion molecules VCAM1 and CD99 on the surface of human cells. Increases the production of chemokines for neutrophils and monocytes, such as KC/CXCL1, MIP-2/CXCL2 and MIP-1/CCL2, and anti-inflammatory cytokine IL10 in mouse inflammation models. Reduces the recruitment of mouse neutrophils and monocytes to the site of inflammation. Decreases expression of CXCR2 on the surface of mouse neutrophils. Increases expression of integrin ITGAM/ITGB2 on the surface of mouse neutrophils. This chain is Iripin-1, found in Ixodes ricinus (Common tick).